A 243-amino-acid polypeptide reads, in one-letter code: Tryptophan synthase alpha chain (243 aa).

Active-site proton acceptor residues include glutamate 31 and aspartate 42.

Belongs to the TrpA family. As to quaternary structure, tetramer of two alpha and two beta chains.

It carries out the reaction (1S,2R)-1-C-(indol-3-yl)glycerol 3-phosphate + L-serine = D-glyceraldehyde 3-phosphate + L-tryptophan + H2O. The protein operates within amino-acid biosynthesis; L-tryptophan biosynthesis; L-tryptophan from chorismate: step 5/5. The alpha subunit is responsible for the aldol cleavage of indoleglycerol phosphate to indole and glyceraldehyde 3-phosphate. In Staphylococcus epidermidis (strain ATCC 35984 / DSM 28319 / BCRC 17069 / CCUG 31568 / BM 3577 / RP62A), this protein is Tryptophan synthase alpha chain.